Reading from the N-terminus, the 515-residue chain is SWI/SNF-related matrix-associated actin-dependent regulator of chromatin subfamily D member 1 (515 aa).

Residues 1-103 (MAARAGFQSV…SGMDQSRKRP (103 aa)) form a disordered region. Residues 14–23 (GGAGASGGAG) are compositionally biased toward gly residues. The interval 43-167 (APGQGLYRSP…DQTIMRKRLD (125 aa)) is interaction with ESR1, NR1H4, NR3C1, PGR and SMARCA4. Asymmetric dimethylarginine is present on residues R68 and R88. K101 participates in a covalent cross-link: Glycyl lysine isopeptide (Lys-Gly) (interchain with G-Cter in SUMO2). Residues 168–474 (IQEALKRPIK…TMTDVVGNPE (307 aa)) form an interaction with SMARCC1 and SMARCC2 region. A necessary for GR/NR3C1-mediated remodeling and transcription from chromatin; required for GR/NR3C1 interaction with the BRG1/SMARCA4 complex in vivo region spans residues 180–515 (RKLRIFISNT…LEQALGIRNT (336 aa)). T203 is subject to Phosphothreonine. An N6-acetyllysine modification is found at K223. One can recognise an SWIB/MDM2 domain in the interval 290–367 (YQPPQFKLDP…PQRLHALLMP (78 aa)). A coiled-coil region spans residues 412-440 (ASQQEIATLDNKIHETIETINQLKTQREF).

This sequence belongs to the SMARCD family. As to quaternary structure, component of the multiprotein chromatin-remodeling complexes SWI/SNF: SWI/SNF-A (BAF), SWI/SNF-B (PBAF) and related complexes. The canonical complex contains a catalytic subunit (either SMARCA4/BRG1/BAF190A or SMARCA2/BRM/BAF190B), and at least SMARCE1, ACTL6A/BAF53, SMARCC1/BAF155, SMARCC2/BAF170, and SMARCB1/SNF5/BAF47. Other subunits specific to each of the complexes may also be present permitting several possible combinations developmentally and tissue specific. Component of the BAF complex, which includes at least actin (ACTB), ARID1A/BAF250A, ARID1B/BAF250B, SMARCA2/BRM, SMARCA4/BRG1/BAF190A, ACTL6A/BAF53, ACTL6B/BAF53B, SMARCE1/BAF57, SMARCC1/BAF155, SMARCC2/BAF170, SMARCB1/SNF5/INI1, and one or more SMARCD1/BAF60A, SMARCD2/BAF60B, or SMARCD3/BAF60C. In muscle cells, the BAF complex also contains DPF3. Component of neural progenitors-specific chromatin remodeling complex (npBAF complex) composed of at least, ARID1A/BAF250A or ARID1B/BAF250B, SMARCD1/BAF60A, SMARCD3/BAF60C, SMARCA2/BRM/BAF190B, SMARCA4/BRG1/BAF190A, SMARCB1/BAF47, SMARCC1/BAF155, SMARCE1/BAF57, SMARCC2/BAF170, PHF10/BAF45A, ACTL6A/BAF53A and actin. Component of neuron-specific chromatin remodeling complex (nBAF complex) composed of at least, ARID1A/BAF250A or ARID1B/BAF250B, SMARCD1/BAF60A, SMARCD3/BAF60C, SMARCA2/BRM/BAF190B, SMARCA4/BRG1/BAF190A, SMARCB1/BAF47, SMARCC1/BAF155, SMARCE1/BAF57, SMARCC2/BAF170, DPF1/BAF45B, DPF3/BAF45C, ACTL6B/BAF53B and actin. Component of the SWI/SNF-B (PBAF) chromatin remodeling complex, at least composed of SMARCA4/BRG1, SMARCB1/BAF47/SNF5, ACTL6A/BAF53A or ACTL6B/BAF53B, SMARCE1/BAF57, SMARCD1/BAF60A, SMARCD2/BAF60B, perhaps SMARCD3/BAF60C, SMARCC1/BAF155, SMARCC2/BAF170, PBRM1/BAF180, ARID2/BAF200 and actin (ACTB). Component of SWI/SNF (GBAF) subcomplex, which includes at least BICRA or BICRAL (mutually exclusive), BRD9, SS18, SMARCA2/BRM, SMARCA4/BRG1/BAF190A, ACTL6A/BAF53, SMARCC1/BAF155, and SMARCD1/BAF60A. Specifically interacts with the VDR heterodimer complex. Interacts with ESR1, NR3C1, NR1H4, PGR, SMARCA4, SMARCC1 and SMARCC2. Interacts with DPF2. Interacts with DPF3a (isoform 2 of DPF3/BAF45C) and with HDGFL2 in a DPF3a-dependent manner. Interacts with FOS, FOSB isoform 1 and 2, FOSL1 and FOSL2. As to expression, expressed in all tissues tested, including brain, heart, kidney, liver, lung, muscle, pancreas and placenta.

It is found in the nucleus. Involved in transcriptional activation and repression of select genes by chromatin remodeling (alteration of DNA-nucleosome topology). Component of SWI/SNF chromatin remodeling complexes that carry out key enzymatic activities, changing chromatin structure by altering DNA-histone contacts within a nucleosome in an ATP-dependent manner. Belongs to the neural progenitors-specific chromatin remodeling complex (npBAF complex) and the neuron-specific chromatin remodeling complex (nBAF complex). During neural development a switch from a stem/progenitor to a postmitotic chromatin remodeling mechanism occurs as neurons exit the cell cycle and become committed to their adult state. The transition from proliferating neural stem/progenitor cells to postmitotic neurons requires a switch in subunit composition of the npBAF and nBAF complexes. As neural progenitors exit mitosis and differentiate into neurons, npBAF complexes which contain ACTL6A/BAF53A and PHF10/BAF45A, are exchanged for homologous alternative ACTL6B/BAF53B and DPF1/BAF45B or DPF3/BAF45C subunits in neuron-specific complexes (nBAF). The npBAF complex is essential for the self-renewal/proliferative capacity of the multipotent neural stem cells. The nBAF complex along with CREST plays a role regulating the activity of genes essential for dendrite growth. Has a strong influence on vitamin D-mediated transcriptional activity from an enhancer vitamin D receptor element (VDRE). May be a link between mammalian SWI-SNF-like chromatin remodeling complexes and the vitamin D receptor (VDR) heterodimer. Mediates critical interactions between nuclear receptors and the BRG1/SMARCA4 chromatin-remodeling complex for transactivation. Interacts with AKIRIN2. This Homo sapiens (Human) protein is SWI/SNF-related matrix-associated actin-dependent regulator of chromatin subfamily D member 1.